The primary structure comprises 361 residues: Homer protein homolog 3 (361 aa).

Residues M1–W80 form a required for interaction with NFATC2 region. A WH1 domain is found at M1–A113. Residues R114–E169 form a disordered region. S120 and S159 each carry phosphoserine. 2 coiled-coil regions span residues A191–T243 and G254–E358.

The protein belongs to the Homer family. In terms of assembly, tetramer. Isoform 1 and isoform 2 encode coiled-coil structures that mediate homo- and heteromultimerization. Interacts with NFATC2; interaction is calcium independent; interaction competes with PPP3CA for NFATC2 binding; interaction is reduced by AKT activation. Interacts with NFATC1 and NFATC4. Interacts with SHANK1; forms a high-order complex at least composed of SHANK1 and HOMER3; the complex formation is regulated by CAMK2A-mediated phosphorylation.

The protein localises to the cytoplasm. Its subcellular location is the postsynaptic density. The protein resides in the synapse. Postsynaptic density scaffolding protein. Binds and cross-links cytoplasmic regions of GRM1, GRM5, ITPR1, DNM3, RYR1, RYR2, SHANK1 and SHANK3. By physically linking GRM1 and GRM5 with ER-associated ITPR1 receptors, it aids the coupling of surface receptors to intracellular calcium release. Isoforms can be differently regulated and may play an important role in maintaining the plasticity at glutamatergic synapses. Negatively regulates T cell activation by inhibiting the calcineurin-NFAT pathway. Acts by competing with calcineurin/PPP3CA for NFAT protein binding, hence preventing NFAT activation by PPP3CA. The protein is Homer protein homolog 3 of Homo sapiens (Human).